Reading from the N-terminus, the 627-residue chain is MEDRQTRLFLALILSMGIWMGVNYFFFPNTSTKKNTETKQTQSDKTSENTKQQITSGKTKESNSADPVVQKEKITPFDTKKSFIVTDSYIVEFSSLGGKISKFYMKDFTGPNGELIQVARKNPETVVVDGKSYQAVELSRDKGFDFNFSDSLVEISDSPWNYIQFSLTEDKINHSISFSAVSPDRSYQLKKEFRFYPSENYFKLSISIINFSKEKLSFASQKNVRYLRTFGSLGPYPKDRPLSDRDTANFFRFYYLGGSFQDTLDGSSSVGFWSSVGNFFTGNSGTDESFSIKTDKESGVDFAGTGSRYFIAVADPLDHKPHGIVLDNRPKNESGAVLVYDNILLNPGENYNLDFASYIGIRESEGMAFKNPELDPSQSKNSPFVGLSSDLNKSFNQGITTPFRNGIIWILKQIYRFTIPNYGWSIIIFAILFKLVFYPLNQKQADSMKKMQELSPQLKTINEKFANDPKMRQQKTMELYKKNNVNPVGGCLPMVIQIPIFIALYTAFSDTIDLWNSPFLWVKDLSEPDVIWTSPAIPYFTQTGIGLNLLALLMVGTQVFQTRMTSVSMDPNQKMLMYVMPVMMLYIFWNMPSGVTLYWTFQNVLSIGQQWITNHLKKTEEKKKAKV.

The chain crosses the membrane as a helical span at residues 8–28; sequence LFLALILSMGIWMGVNYFFFP. The segment covering 33–57 has biased composition (polar residues); the sequence is KKNTETKQTQSDKTSENTKQQITSG. A disordered region spans residues 33–68; that stretch reads KKNTETKQTQSDKTSENTKQQITSGKTKESNSADPV. Basic and acidic residues predominate over residues 58–68; the sequence is KTKESNSADPV. 4 helical membrane passes run 417–437, 488–508, 536–556, and 575–595; these read FTIPNYGWSIIIFAILFKLVF, VGGCLPMVIQIPIFIALYTAF, AIPYFTQTGIGLNLLALLMVG, and MLMYVMPVMMLYIFWNMPSGV.

It belongs to the OXA1/ALB3/YidC family. Type 1 subfamily. In terms of assembly, interacts with the Sec translocase complex via SecD. Specifically interacts with transmembrane segments of nascent integral membrane proteins during membrane integration.

The protein localises to the cell inner membrane. Required for the insertion and/or proper folding and/or complex formation of integral membrane proteins into the membrane. Involved in integration of membrane proteins that insert both dependently and independently of the Sec translocase complex, as well as at least some lipoproteins. Aids folding of multispanning membrane proteins. The polypeptide is Membrane protein insertase YidC (Leptospira interrogans serogroup Icterohaemorrhagiae serovar Lai (strain 56601)).